The sequence spans 651 residues: DNA mismatch repair protein MutL (651 aa).

Positions 383-405 (TAAEEPTPAPTSPDLEIGDLDDQ) are disordered.

Belongs to the DNA mismatch repair MutL/HexB family.

Functionally, this protein is involved in the repair of mismatches in DNA. It is required for dam-dependent methyl-directed DNA mismatch repair. May act as a 'molecular matchmaker', a protein that promotes the formation of a stable complex between two or more DNA-binding proteins in an ATP-dependent manner without itself being part of a final effector complex. This Lacticaseibacillus paracasei (strain ATCC 334 / BCRC 17002 / CCUG 31169 / CIP 107868 / KCTC 3260 / NRRL B-441) (Lactobacillus paracasei) protein is DNA mismatch repair protein MutL.